The chain runs to 425 residues: Serine--tRNA ligase (425 aa).

Disordered regions lie at residues 43–68 (QRSS…GSDP) and 108–131 (LPNL…RHCW). Basic and acidic residues predominate over residues 117-131 (PEGRDENDNQERHCW). L-serine is bound at residue 233–235 (TAE). 264–266 (RRE) contacts ATP. Glutamate 287 contributes to the L-serine binding site. Residue 351–354 (EISS) participates in ATP binding. L-serine is bound at residue serine 385.

It belongs to the class-II aminoacyl-tRNA synthetase family. Type-1 seryl-tRNA synthetase subfamily. Homodimer. The tRNA molecule binds across the dimer.

Its subcellular location is the cytoplasm. The enzyme catalyses tRNA(Ser) + L-serine + ATP = L-seryl-tRNA(Ser) + AMP + diphosphate + H(+). The catalysed reaction is tRNA(Sec) + L-serine + ATP = L-seryl-tRNA(Sec) + AMP + diphosphate + H(+). It functions in the pathway aminoacyl-tRNA biosynthesis; selenocysteinyl-tRNA(Sec) biosynthesis; L-seryl-tRNA(Sec) from L-serine and tRNA(Sec): step 1/1. Catalyzes the attachment of serine to tRNA(Ser). Is also able to aminoacylate tRNA(Sec) with serine, to form the misacylated tRNA L-seryl-tRNA(Sec), which will be further converted into selenocysteinyl-tRNA(Sec). The chain is Serine--tRNA ligase from Prochlorococcus marinus (strain MIT 9303).